The following is a 237-amino-acid chain: Endonuclease V (237 aa).

Positions 46 and 114 each coordinate Mg(2+).

Belongs to the endonuclease V family. Requires Mg(2+) as cofactor.

The protein resides in the cytoplasm. The catalysed reaction is Endonucleolytic cleavage at apurinic or apyrimidinic sites to products with a 5'-phosphate.. Its function is as follows. DNA repair enzyme involved in the repair of deaminated bases. Selectively cleaves double-stranded DNA at the second phosphodiester bond 3' to a deoxyinosine leaving behind the intact lesion on the nicked DNA. The chain is Endonuclease V from Xanthomonas axonopodis pv. citri (strain 306).